Consider the following 431-residue polypeptide: MWRRSVVYRFSSRISVSSSLPNPRLIPWSRELCAVNSFSQPPVSTESTAKLGITGVRSDANRVFATATAAATATATTGEISSRVAALAGLGHHYARCYWELSKAKLSMLVVATSGTGYILGTGNAAISFPGLCYTCAGTMMIAASANSLNQIFEISNDSKMKRTMLRPLPSGRISVPHAVAWATIAGASGACLLASKTNMLAAGLASANLVLYAFVYTPLKQLHPINTWVGAVVGAIPPLLGWAAASGQISYNSMILPAALYFWQIPHFMALAHLCRNDYAAGGYKMLSLFDPSGKRIAAVALRNCFYMIPLGFIAYDWGLTSSWFCLESTLLTLAIAATAFSFYRDRTMHKARKMFHASLLFLPVFMSGLLLHRVSNDNQQQLVEEAGLTNSVSGEVKTQRRKKRVAQPPVAYASAAPFPFLPAPSFYSP.

The transit peptide at 1–33 directs the protein to the mitochondrion; it reads MWRRSVVYRFSSRISVSSSLPNPRLIPWSRELC. The next 9 helical transmembrane spans lie at 109-129, 131-153, 174-194, 200-220, 226-246, 255-275, 298-317, 322-344, and 356-376; these read LVVA…AISF, GLCY…NQIF, ISVP…ACLL, MLAA…YTPL, INTW…WAAA, MILP…LAHL, IAAV…FIAY, TSSW…AFSF, and MFHA…LHRV.

The protein belongs to the ubiA prenyltransferase (TC 3.D.4.8) family.

It is found in the mitochondrion inner membrane. It carries out the reaction heme b + (2E,6E)-farnesyl diphosphate + H2O = Fe(II)-heme o + diphosphate. Converts protoheme IX and farnesyl diphosphate to heme O. The chain is Protoheme IX farnesyltransferase, mitochondrial (COX10) from Arabidopsis thaliana (Mouse-ear cress).